Reading from the N-terminus, the 798-residue chain is ATP-dependent RNA helicase bel (798 aa).

The segment at 16 to 248 (VAGLDLNGGS…SRWKEGGGSN (233 aa)) is disordered. A compositionally biased stretch (polar residues) spans 31–42 (PITSKTSTNSVT). Composition is skewed to gly residues over residues 94–110 (RGGG…GGRG), 118–132 (YGYG…GGGG), and 154–178 (SGGG…GGSG). Phosphoserine is present on residues S177 and S179. The segment covering 198–209 (RNDRWQEPERPA) has biased composition (basic and acidic residues). S214 and S219 each carry phosphoserine. The short motif at 295 to 323 (TSFDDVQLTEIIRNNVALARYDKPTPVQK) is the Q motif element. Residues 315 to 322 (YDKPTPVQ) and 339 to 346 (AQTGSGKT) each bind ATP. Positions 326-515 (IPIIINGRDL…SDFLSNYIFL (190 aa)) constitute a Helicase ATP-binding domain. The short motif at 459–462 (DEAD) is the DEAD box element. The region spanning 542 to 693 (YLLDLLSSIR…EIPSFMEDMS (152 aa)) is the Helicase C-terminal domain. S638 bears the Phosphoserine mark. 2 disordered regions span residues 689–765 (MEDM…SGGG) and 778–798 (GGSY…WWAQ). Gly residues-rich tracts occupy residues 706 to 717 (RGGGGRYGGGFG) and 740 to 750 (GGSGSGGGGGS).

This sequence belongs to the DEAD box helicase family. DDX3/DED1 subfamily. As to expression, vas and bel colocalize in nuage (perinuclear, electron-dense granules in germline cells) and at the oocyte posterior during oogenesis.

It is found in the cytoplasm. It carries out the reaction ATP + H2O = ADP + phosphate + H(+). In terms of biological role, ATP-dependent RNA helicase that is essential and required for cellular function, larval growth, and for male and female fertility. Also required for RNA interference (RNAi), double-stranded RNA induces potent and specific gene silencing, by acting downstream of dsRNA internalization. RNAi is mediated by the RNA-induced silencing complex (RISC), a sequence-specific, multicomponent nuclease that destroys or silences messenger RNAs homologous to the silencing trigger. This chain is ATP-dependent RNA helicase bel, found in Drosophila melanogaster (Fruit fly).